The chain runs to 331 residues: GTP 3',8-cyclase (331 aa).

In terms of domain architecture, Radical SAM core spans 6–234 (PFNRKIDYLR…PATGKSHDGP (229 aa)). Arginine 15 contacts GTP. [4Fe-4S] cluster-binding residues include cysteine 22 and cysteine 26. Position 28 (tyrosine 28) interacts with S-adenosyl-L-methionine. Cysteine 29 contacts [4Fe-4S] cluster. Arginine 66 contacts GTP. Residue glycine 70 coordinates S-adenosyl-L-methionine. Serine 97 contributes to the GTP binding site. Serine 121 provides a ligand contact to S-adenosyl-L-methionine. GTP is bound at residue lysine 158. Methionine 192 contacts S-adenosyl-L-methionine. Residues cysteine 258 and cysteine 261 each contribute to the [4Fe-4S] cluster site. 263–265 (RVR) contributes to the GTP binding site. Cysteine 275 is a binding site for [4Fe-4S] cluster.

The protein belongs to the radical SAM superfamily. MoaA family. As to quaternary structure, monomer and homodimer. [4Fe-4S] cluster serves as cofactor.

It catalyses the reaction GTP + AH2 + S-adenosyl-L-methionine = (8S)-3',8-cyclo-7,8-dihydroguanosine 5'-triphosphate + 5'-deoxyadenosine + L-methionine + A + H(+). Its pathway is cofactor biosynthesis; molybdopterin biosynthesis. Its function is as follows. Catalyzes the cyclization of GTP to (8S)-3',8-cyclo-7,8-dihydroguanosine 5'-triphosphate. The polypeptide is GTP 3',8-cyclase (Hydrogenovibrio crunogenus (strain DSM 25203 / XCL-2) (Thiomicrospira crunogena)).